A 103-amino-acid chain; its full sequence is UPF0145 protein Amet_0532 (103 aa).

The protein belongs to the UPF0145 family.

This Alkaliphilus metalliredigens (strain QYMF) protein is UPF0145 protein Amet_0532.